The chain runs to 185 residues: Ribonuclease M5 (185 aa).

Residues 4–87 (KEIIVVEGKD…AFLPKEEALA (84 aa)) enclose the Toprim domain. Positions 10, 56, and 58 each coordinate Mg(2+).

This sequence belongs to the ribonuclease M5 family. The cofactor is Mg(2+).

The protein resides in the cytoplasm. It catalyses the reaction Endonucleolytic cleavage of RNA, removing 21 and 42 nucleotides, respectively, from the 5'- and 3'-termini of a 5S-rRNA precursor.. Its function is as follows. Required for correct processing of both the 5' and 3' ends of 5S rRNA precursor. Cleaves both sides of a double-stranded region yielding mature 5S rRNA in one step. In Bacillus anthracis, this protein is Ribonuclease M5.